We begin with the raw amino-acid sequence, 1349 residues long: Protein strawberry notch homolog 2 (1349 aa).

Disordered regions lie at residues 170–212, 609–633, and 1319–1349; these read YQSH…QHPD, STRRRRDRGGGKRKRRPRGRGPKAS, and PTETPAPLVGVGGGGTERQSVIHFSPPFPNS. A compositionally biased stretch (acidic residues) spans 177 to 188; it reads EEEEGEEEEETE. Residues 609–631 show a composition bias toward basic residues; sequence STRRRRDRGGGKRKRRPRGRGPK.

This sequence belongs to the SBNO family. As to quaternary structure, interacts with TAL1; this interaction inhibits TAL1 occupancy of the DCSTAMP promoter, leading to the activation of the DCSTAMP promoter by the transcription factor MITF. As to expression, expressed in the spleen and bone marrow, and to a lesser extent in the kidney, liver, brain, skin, heart and muscle. Expressed predominantly in osteoclasts, and to a lesser extent in T-cells, B-cells and osteoblasts. Expressed in macrophages.

Acts as a transcriptional coregulator, that can have both coactivator and corepressor functions. Inhibits the DCSTAMP-repressive activity of TAL1, hence enhancing the access of the transcription factor MITF to the DC-STAMP promoter in osteoclast. Plays a role in bone homeostasis; required as a positive regulator in TNFSF11//RANKL-mediated osteoclast fusion via a DCSTAMP-dependent pathway. May also be required in the regulation of osteoblast differentiation. Involved in the transcriptional corepression of NF-kappaB in macrophages. Plays a role as a regulator in the pro-inflammatory cascade. The polypeptide is Protein strawberry notch homolog 2 (Sbno2) (Mus musculus (Mouse)).